A 607-amino-acid chain; its full sequence is WD repeat-containing protein 1-B (607 aa).

WD repeat units follow at residues 4-45 (EIKK…IRNI), 48-87 (PAIADIYTEHAHQVVVARYAPSGFYIASGDTSGKLRIWDT), 93-135 (LLKY…LWDT), 138-176 (SVGEIIGNIKVINSVDIKQTRPYRLVTGSDDNCCAFFEG), 180-218 (KFKFTMSDHSRFVNCVRFSPDGSRLASAGADGQIFLYDG), 224-263 (VCSLGGSKAHDGGIYAVSWSPDGTQLLSASGDKTAKIWDV), 270-306 (TTFNLGSDVLDQQLGCLWQKDYLLSVSLSGYINYLDK), 311-351 (KPFR…YWDA), 358-408 (TFTG…KMDV), 432-474 (LKDK…LYSI), 480-518 (KDEGKTLPAKGAVTDLAYSPDGAFLAVTDANKVVTVFSV), 523-561 (SEHNSYYGHHAKALSVAWSPDNEHFASSGMDMMVYVWTL), and 566-604 (TRIKMPDAHRLHHVSSLAWLDENTLATVSHDACVKQWTV).

The protein belongs to the WD repeat AIP1 family.

Its subcellular location is the cell membrane. The protein localises to the cytoplasm. The protein resides in the cytoskeleton. It is found in the nucleus. In terms of biological role, induces disassembly of actin filaments in conjunction with ADF/cofilin family proteins. Doesn't sever actin filaments alone, but caps the barbed ends of filaments severed by cofilin, which blocks annealing and depolymerization and allows more extensive severing by cofilin. This Xenopus laevis (African clawed frog) protein is WD repeat-containing protein 1-B (wdr1-b).